The following is a 622-amino-acid chain: Low affinity potassium transport system protein Kup (622 aa).

The next 12 membrane-spanning stretches (helical) occupy residues 9-29 (LPAI…TSPL), 49-69 (VFGF…IKYL), 103-123 (VIMG…TPAI), 137-157 (PQLD…LFMI), 165-185 (VGKL…GLGL), 213-233 (VSFI…ALYA), 247-267 (WFTV…ALLL), 276-296 (PFFL…AALA), 337-357 (IYIP…IVSF), 363-383 (LAAA…ILST), 396-416 (FVAL…TANL), and 419-439 (LLSG…VMTT).

Belongs to the HAK/KUP transporter (TC 2.A.72) family.

Its subcellular location is the cell inner membrane. It carries out the reaction K(+)(in) + H(+)(in) = K(+)(out) + H(+)(out). Responsible for the low-affinity transport of potassium into the cell. Likely operates as a K(+):H(+) symporter. In Escherichia fergusonii (strain ATCC 35469 / DSM 13698 / CCUG 18766 / IAM 14443 / JCM 21226 / LMG 7866 / NBRC 102419 / NCTC 12128 / CDC 0568-73), this protein is Low affinity potassium transport system protein Kup.